The sequence spans 501 residues: Aldehyde dehydrogenase 1A1 (501 aa).

Ser2 is modified (N-acetylserine). N6-acetyllysine is present on residues Lys91 and Lys128. Residues 167–170, 193–196, 226–227, and 246–247 each bind NAD(+); these read IPWN, KPAE, GP, and GS. An N6-acetyllysine modification is found at Lys252. Glu269 serves as the catalytic Proton acceptor. An NAD(+)-binding site is contributed by 269–271; it reads ELG. Cys303 serves as the catalytic Nucleophile. The mediates interaction with PRMT3 stretch occupies residues 336-501; the sequence is LTPGVSQGPQ…VTIKISQKNS (166 aa). Residue Thr337 is modified to Phosphothreonine. 349-353 is a binding site for NAD(+); that stretch reads EQYEK. N6-acetyllysine is present on residues Lys353 and Lys367. 400–402 is a binding site for NAD(+); sequence EIF. Position 410 is an N6-acetyllysine (Lys410). Phosphoserine is present on Ser413. Residues Lys419 and Lys495 each carry the N6-acetyllysine modification.

Belongs to the aldehyde dehydrogenase family. In terms of assembly, homotetramer. Interacts with PRMT3; the interaction is direct, inhibits ALDH1A1 aldehyde dehydrogenase activity and is independent of the methyltransferase activity of PRMT3. In terms of processing, the N-terminus is blocked most probably by acetylation. As to expression, expressed in muscle, liver, small intestine, kidney, brain, lung, heart but not detected in erythrocytes (at protein level).

The protein resides in the cytoplasm. The protein localises to the cytosol. Its subcellular location is the cell projection. It is found in the axon. The catalysed reaction is an aldehyde + NAD(+) + H2O = a carboxylate + NADH + 2 H(+). It catalyses the reaction all-trans-retinal + NAD(+) + H2O = all-trans-retinoate + NADH + 2 H(+). The enzyme catalyses 9-cis-retinal + NAD(+) + H2O = 9-cis-retinoate + NADH + 2 H(+). It carries out the reaction 11-cis-retinal + NAD(+) + H2O = 11-cis-retinoate + NADH + 2 H(+). The catalysed reaction is 13-cis-retinal + NAD(+) + H2O = 13-cis-retinoate + NADH + 2 H(+). It catalyses the reaction 3-deoxyglucosone + NAD(+) + H2O = 2-dehydro-3-deoxy-D-gluconate + NADH + 2 H(+). The enzyme catalyses (E)-4-hydroxynon-2-enal + NAD(+) + H2O = (E)-4-hydroxynon-2-enoate + NADH + 2 H(+). It carries out the reaction malonaldehyde + NAD(+) + H2O = 3-oxopropanoate + NADH + 2 H(+). The catalysed reaction is hexanal + NAD(+) + H2O = hexanoate + NADH + 2 H(+). It catalyses the reaction propanal + NAD(+) + H2O = propanoate + NADH + 2 H(+). The enzyme catalyses acetaldehyde + NAD(+) + H2O = acetate + NADH + 2 H(+). It carries out the reaction benzaldehyde + NAD(+) + H2O = benzoate + NADH + 2 H(+). The catalysed reaction is 4-aminobutanal + NAD(+) + H2O = 4-aminobutanoate + NADH + 2 H(+). It participates in cofactor metabolism; retinol metabolism. In terms of biological role, cytosolic dehydrogenase that catalyzes the irreversible oxidation of a wide range of aldehydes to their corresponding carboxylic acid. Functions downstream of retinol dehydrogenases and catalyzes the oxidation of retinaldehyde into retinoic acid, the second step in the oxidation of retinol/vitamin A into retinoic acid. This pathway is crucial to control the levels of retinol and retinoic acid, two important molecules which excess can be teratogenic and cytotoxic. Also oxidizes aldehydes resulting from lipid peroxidation like (E)-4-hydroxynon-2-enal/HNE, malonaldehyde and hexanal that form protein adducts and are highly cytotoxic. By participating for instance to the clearance of (E)-4-hydroxynon-2-enal/HNE in the lens epithelium prevents the formation of HNE-protein adducts and lens opacification. Also functions downstream of fructosamine-3-kinase in the fructosamine degradation pathway by catalyzing the oxidation of 3-deoxyglucosone, the carbohydrate product of fructosamine 3-phosphate decomposition, which is itself a potent glycating agent that may react with lysine and arginine side-chains of proteins. Also has an aminobutyraldehyde dehydrogenase activity and is probably part of an alternative pathway for the biosynthesis of GABA/4-aminobutanoate in midbrain, thereby playing a role in GABAergic synaptic transmission. The protein is Aldehyde dehydrogenase 1A1 of Bos taurus (Bovine).